Here is a 127-residue protein sequence, read N- to C-terminus: Translation initiation factor 5A (127 aa).

A Hypusine modification is found at K35.

It belongs to the eIF-5A family.

Its subcellular location is the cytoplasm. Functionally, functions by promoting the formation of the first peptide bond. The sequence is that of Translation initiation factor 5A from Methanospirillum hungatei JF-1 (strain ATCC 27890 / DSM 864 / NBRC 100397 / JF-1).